The primary structure comprises 237 residues: Ribose-5-phosphate isomerase A (237 aa).

Residues 33-36 (TGST), 90-93 (DGAD), and 103-106 (KGGG) each bind substrate. The active-site Proton acceptor is glutamate 112. Lysine 130 contributes to the substrate binding site.

This sequence belongs to the ribose 5-phosphate isomerase family. In terms of assembly, homodimer.

It catalyses the reaction aldehydo-D-ribose 5-phosphate = D-ribulose 5-phosphate. It participates in carbohydrate degradation; pentose phosphate pathway; D-ribose 5-phosphate from D-ribulose 5-phosphate (non-oxidative stage): step 1/1. Functionally, catalyzes the reversible conversion of ribose-5-phosphate to ribulose 5-phosphate. This is Ribose-5-phosphate isomerase A from Trichodesmium erythraeum (strain IMS101).